We begin with the raw amino-acid sequence, 393 residues long: 1-deoxy-D-xylulose 5-phosphate reductoisomerase (393 aa).

The NADPH site is built by T10, G11, S12, I13, Q38, and N124. K125 provides a ligand contact to 1-deoxy-D-xylulose 5-phosphate. E126 is an NADPH binding site. A Mn(2+)-binding site is contributed by D150. 1-deoxy-D-xylulose 5-phosphate-binding residues include S151, E152, S179, and H202. Residue E152 participates in Mn(2+) binding. G208 provides a ligand contact to NADPH. The 1-deoxy-D-xylulose 5-phosphate site is built by S215, N220, K221, and E224. Residue E224 coordinates Mn(2+).

It belongs to the DXR family. Mg(2+) serves as cofactor. The cofactor is Mn(2+).

It carries out the reaction 2-C-methyl-D-erythritol 4-phosphate + NADP(+) = 1-deoxy-D-xylulose 5-phosphate + NADPH + H(+). The protein operates within isoprenoid biosynthesis; isopentenyl diphosphate biosynthesis via DXP pathway; isopentenyl diphosphate from 1-deoxy-D-xylulose 5-phosphate: step 1/6. Functionally, catalyzes the NADPH-dependent rearrangement and reduction of 1-deoxy-D-xylulose-5-phosphate (DXP) to 2-C-methyl-D-erythritol 4-phosphate (MEP). The chain is 1-deoxy-D-xylulose 5-phosphate reductoisomerase from Ralstonia nicotianae (strain ATCC BAA-1114 / GMI1000) (Ralstonia solanacearum).